A 138-amino-acid chain; its full sequence is Large ribosomal subunit protein uL16 (138 aa).

The span at methionine 1–glycine 19 shows a compositional bias: basic residues. Residues methionine 1–glycine 24 form a disordered region.

This sequence belongs to the universal ribosomal protein uL16 family. Part of the 50S ribosomal subunit.

In terms of biological role, binds 23S rRNA and is also seen to make contacts with the A and possibly P site tRNAs. This chain is Large ribosomal subunit protein uL16, found in Mycobacteroides abscessus (strain ATCC 19977 / DSM 44196 / CCUG 20993 / CIP 104536 / JCM 13569 / NCTC 13031 / TMC 1543 / L948) (Mycobacterium abscessus).